The sequence spans 131 residues: MEEAGLCGLREKADMLCNSESHDILQHQDSNCSATSNKHLLEDEEGRDFITKNRSWVSPVHCTQESRRELPEQEVAPPSGQQALQCNRNKEKVLGKEVLLLMQALNTLSTPEEKLAALCKKYADLGNSPLL.

The protein belongs to the taxilin family. Ubiquitously expressed.

The protein is Putative gamma-taxilin 2 (TXLNGY) of Homo sapiens (Human).